The primary structure comprises 465 residues: Cysteine--tRNA ligase 2 (465 aa).

C30 provides a ligand contact to Zn(2+). Positions I32–H42 match the 'HIGH' region motif. Zn(2+) contacts are provided by C214, H239, and E243. The short motif at K271 to S275 is the 'KMSKS' region element. K274 is an ATP binding site.

It belongs to the class-I aminoacyl-tRNA synthetase family. As to quaternary structure, monomer. The cofactor is Zn(2+).

The protein resides in the cytoplasm. It catalyses the reaction tRNA(Cys) + L-cysteine + ATP = L-cysteinyl-tRNA(Cys) + AMP + diphosphate. This Burkholderia lata (strain ATCC 17760 / DSM 23089 / LMG 22485 / NCIMB 9086 / R18194 / 383) protein is Cysteine--tRNA ligase 2.